Here is a 231-residue protein sequence, read N- to C-terminus: MTQDELKQLVGQAAADYVNANVPEGSVIGVGTGSTANCFIDALAAGKTRYRGAVSSSLATTARLQSHGFKVLDLNEIDSLPVYVDGADEIDHSGAMIKGGGGALTREKIVASVSDVFVCIADASKLVETLGSFPLPIEVVPMARTSIGRRVTALGGVPVVRVTKEGVPFITDNGNEIIDVKGLRISDPRTLETHVNAWPGVVTVGLFASRGADLCLLGTDTGVDTIRFSKG.

Substrate is bound by residues 32–35, 85–88, and 98–101; these read TGST, DGAD, and KGGG. The Proton acceptor role is filled by glutamate 107. Lysine 125 serves as a coordination point for substrate.

This sequence belongs to the ribose 5-phosphate isomerase family. In terms of assembly, homodimer.

It carries out the reaction aldehydo-D-ribose 5-phosphate = D-ribulose 5-phosphate. The protein operates within carbohydrate degradation; pentose phosphate pathway; D-ribose 5-phosphate from D-ribulose 5-phosphate (non-oxidative stage): step 1/1. In terms of biological role, catalyzes the reversible conversion of ribose-5-phosphate to ribulose 5-phosphate. The sequence is that of Ribose-5-phosphate isomerase A from Paraburkholderia xenovorans (strain LB400).